Consider the following 515-residue polypeptide: Acetyltransferase sphE (515 aa).

Catalysis depends on proton acceptor residues His-184 and Asp-438.

The protein belongs to the plant acyltransferase family. In terms of assembly, monomer.

The enzyme catalyses sphingofungin B + acetyl-CoA = sphingofungin C + CoA. It participates in secondary metabolite biosynthesis. In terms of biological role, acetyltransferase; part of the gene cluster that mediates the biosynthesis of sphingofungins, bioactive molecules acting as sphingolipid inhibitors via inhibiting serine palmitoyl transferase (SPT). Within the pathway, sphE catalyzes the O-acetylation of the C-5 hydroxyl group of sphingofungin B to produce sphingofungin C. SphE can also convert sphingofungin B1 into sphingofungin C1 and sphingofungin B2 into sphingofungin C2. Sphingofungin biosynthesis starts with the PKS sphB that produces an C18 polyketide precursor 3-hydroxyoctadeca-4,10-dienoyl-ACP containing one delta-6 desaturation and one delta-12 desaturation. The aminoacyl transferase sphA uses the sphB product to produce 3-keto-presphingofungin by adding an aminomalonate molecule. SphF then reduces the C-3 ketone of 3-keto-presphingofungin which leads to presphingofungin. The cytochrome P450 monooxygenase sphH converts presphingofungin into sphingofungin B1 which is further converted to sphingofungin B by the dioxygenase sphC. SphC is also able to convert presphingofungin into sphingofungin B2. The acetyltransferase sphE acetylates sphingofungin B to produce sphingofungin C, but can also convert sphingofungin B1 into sphingofungin C1 and sphingofungin B2 into sphingofungin C2. Finally, sphingofungin C can be spontaneously converted into sphingofungin D. The chain is Acetyltransferase sphE from Aspergillus fumigatus (strain CBS 144.89 / FGSC A1163 / CEA10) (Neosartorya fumigata).